The chain runs to 89 residues: Acylphosphatase (89 aa).

Positions 3 to 89 constitute an Acylphosphatase-like domain; that stretch reads ALEIYVSGNV…ENYESFEVAY (87 aa). Residues R18 and N36 contribute to the active site.

The protein belongs to the acylphosphatase family.

It carries out the reaction an acyl phosphate + H2O = a carboxylate + phosphate + H(+). The sequence is that of Acylphosphatase (acyP) from Archaeoglobus fulgidus (strain ATCC 49558 / DSM 4304 / JCM 9628 / NBRC 100126 / VC-16).